We begin with the raw amino-acid sequence, 67 residues long: Conotoxin Cl6.10 (67 aa).

A signal peptide spans 1 to 24 (MKLTCVLIAAVLLLAVCQLDSADA). The propeptide occupies 25-37 (TAYMRKDPSLRSP). 3 cysteine pairs are disulfide-bonded: Cys43–Cys57, Cys50–Cys61, and Cys56–Cys65.

The protein belongs to the conotoxin O1 superfamily. In terms of tissue distribution, expressed by the venom duct.

The protein resides in the secreted. The protein is Conotoxin Cl6.10 of Californiconus californicus (California cone).